We begin with the raw amino-acid sequence, 371 residues long: 4-hydroxy-3-methylbut-2-en-1-yl diphosphate synthase (flavodoxin) (371 aa).

Residues Cys270, Cys273, Cys305, and Glu312 each coordinate [4Fe-4S] cluster.

This sequence belongs to the IspG family. Requires [4Fe-4S] cluster as cofactor.

It catalyses the reaction (2E)-4-hydroxy-3-methylbut-2-enyl diphosphate + oxidized [flavodoxin] + H2O + 2 H(+) = 2-C-methyl-D-erythritol 2,4-cyclic diphosphate + reduced [flavodoxin]. Its pathway is isoprenoid biosynthesis; isopentenyl diphosphate biosynthesis via DXP pathway; isopentenyl diphosphate from 1-deoxy-D-xylulose 5-phosphate: step 5/6. Functionally, converts 2C-methyl-D-erythritol 2,4-cyclodiphosphate (ME-2,4cPP) into 1-hydroxy-2-methyl-2-(E)-butenyl 4-diphosphate. The polypeptide is 4-hydroxy-3-methylbut-2-en-1-yl diphosphate synthase (flavodoxin) (Shewanella baltica (strain OS223)).